Consider the following 443-residue polypeptide: Pentatricopeptide repeat-containing protein 6, mitochondrial (443 aa).

Residues 1–13 constitute a mitochondrion transit peptide; the sequence is MRILGSLPNNIRK. PPR repeat units follow at residues 130-164 and 220-254; these read NIVDYTHILRVAMYTGNKHILEYIVARVKEKRIRP and NSTTYDYLMVGLSRDGKIREIYDLIDTVWGINENS.

The protein resides in the mitochondrion. In terms of biological role, mitochondrial RNA-binding protein required for the stability of the atp9 mRNA. The sequence is that of Pentatricopeptide repeat-containing protein 6, mitochondrial (ppr6) from Schizosaccharomyces pombe (strain 972 / ATCC 24843) (Fission yeast).